Here is a 267-residue protein sequence, read N- to C-terminus: Putative glycosyltransferase 63 (267 aa).

The protein belongs to the glycosyltransferase group 1 family. Glycosyltransferase 4 subfamily.

In Sulfolobus islandicus filamentous virus (isolate Iceland/Hveragerdi) (SIFV), this protein is Putative glycosyltransferase 63 (SIFV0063).